The sequence spans 186 residues: ADP-ribosylation factor-like protein 8 (186 aa).

Positions 1 to 19 form an intramembrane region, note=Mediates targeting to membranes; sequence MLALINRILEWFKSIFWKE. Residues 29 to 35, 71 to 75, and 130 to 133 each bind GTP; these read QFSGKTT, DIGGQ, and NKRD.

It belongs to the small GTPase superfamily. Arf family. Interacts with tubulin. Interacts (in GTP-bound form) with Rilpl. Interacts with unc-104. In terms of tissue distribution, expressed throughout development, from embryo to adult stage, in different tissues such as larval motor neurons, salivary glands, testis and ovaries (at protein level).

Its subcellular location is the lysosome membrane. It is found in the synapse. It localises to the cell projection. The protein resides in the axon. The protein localises to the perikaryon. Required for normal functioning of the late endocytic pathway including lysosome motility and late endosome-lysosome fusion. Not required for the delivery of lysosomal membrane protein-containing vesicles to late endosomes. In larval motor neurons, mediates the anterograde axonal long-range transport of presynaptic lysosome-related vesicles required for presynaptic biogenesis and synaptic function. Acts downstream of Rab2 during presynaptic precursor vesicle biogenesis. Essential role in chromosome segregation. This is ADP-ribosylation factor-like protein 8 from Drosophila melanogaster (Fruit fly).